Reading from the N-terminus, the 107-residue chain is Anti-adapter protein IraM (107 aa).

Belongs to the IraM/RssC family.

The protein localises to the cytoplasm. In terms of biological role, inhibits RpoS proteolysis by regulating RssB activity, thereby increasing the stability of the sigma stress factor RpoS during magnesium starvation. This is Anti-adapter protein IraM from Shigella dysenteriae serotype 1 (strain Sd197).